A 483-amino-acid polypeptide reads, in one-letter code: Trigger factor (483 aa).

The region spanning 166–251 (TDTVNIDYVG…INDVFTKEKP (86 aa)) is the PPIase FKBP-type domain. Positions 435 to 460 (GEEPKLSTTKKVVEPTEEKTRKDSKM) are enriched in basic and acidic residues. Positions 435–483 (GEEPKLSTTKKVVEPTEEKTRKDSKMSTKKPAAKPAAKPAAATKKPVKK) are disordered. Residues 467–483 (AKPAAKPAAATKKPVKK) are compositionally biased toward low complexity.

It belongs to the FKBP-type PPIase family. Tig subfamily.

Its subcellular location is the cytoplasm. It carries out the reaction [protein]-peptidylproline (omega=180) = [protein]-peptidylproline (omega=0). Functionally, involved in protein export. Acts as a chaperone by maintaining the newly synthesized protein in an open conformation. Functions as a peptidyl-prolyl cis-trans isomerase. This Mycoplasma mobile (strain ATCC 43663 / 163K / NCTC 11711) (Mesomycoplasma mobile) protein is Trigger factor.